The following is a 355-amino-acid chain: Phenylalanine--tRNA ligase alpha subunit (355 aa).

A Mg(2+)-binding site is contributed by Glu273.

The protein belongs to the class-II aminoacyl-tRNA synthetase family. Phe-tRNA synthetase alpha subunit type 1 subfamily. Tetramer of two alpha and two beta subunits. Requires Mg(2+) as cofactor.

The protein localises to the cytoplasm. It catalyses the reaction tRNA(Phe) + L-phenylalanine + ATP = L-phenylalanyl-tRNA(Phe) + AMP + diphosphate + H(+). This is Phenylalanine--tRNA ligase alpha subunit from Bifidobacterium longum (strain NCC 2705).